The chain runs to 456 residues: Cytochrome c biogenesis protein CcsB (456 aa).

3 helical membrane-spanning segments follow: residues 29 to 49, 88 to 108, and 174 to 194; these read LRLAILLLLAIAIASATGTVI, AGWFLGLLILFGASLTACTFR, and VGPILVHAGMLVVLGGAIWGS.

This sequence belongs to the Ccs1/CcsB family. May interact with CcsA.

It localises to the cellular thylakoid membrane. Functionally, required during biogenesis of c-type cytochromes (cytochrome c6 and cytochrome f) at the step of heme attachment. The polypeptide is Cytochrome c biogenesis protein CcsB (Synechococcus sp. (strain ATCC 27144 / PCC 6301 / SAUG 1402/1) (Anacystis nidulans)).